The primary structure comprises 168 residues: G/U mismatch-specific DNA glycosylase (168 aa).

It belongs to the uracil-DNA glycosylase (UDG) superfamily. TDG/mug family. As to quaternary structure, binds DNA as a monomer.

It is found in the cytoplasm. It catalyses the reaction Specifically hydrolyzes mismatched double-stranded DNA and polynucleotides, releasing free uracil.. Its function is as follows. Excises ethenocytosine and uracil, which can arise by alkylation or deamination of cytosine, respectively, from the corresponding mispairs with guanine in ds-DNA. It is capable of hydrolyzing the carbon-nitrogen bond between the sugar-phosphate backbone of the DNA and the mispaired base. The complementary strand guanine functions in substrate recognition. Required for DNA damage lesion repair in stationary-phase cells. In Salmonella gallinarum (strain 287/91 / NCTC 13346), this protein is G/U mismatch-specific DNA glycosylase.